A 626-amino-acid polypeptide reads, in one-letter code: Chaperone protein DnaK (626 aa).

Phosphothreonine; by autocatalysis is present on Thr-197. Residues 598 to 612 (AQGEQGQAAQPQAET) are compositionally biased toward low complexity. A disordered region spans residues 598–626 (AQGEQGQAAQPQAETQGDDVQDVEFEEVK). Residues 613 to 626 (QGDDVQDVEFEEVK) show a composition bias toward acidic residues.

Belongs to the heat shock protein 70 family.

Acts as a chaperone. This is Chaperone protein DnaK from Flavobacterium psychrophilum (strain ATCC 49511 / DSM 21280 / CIP 103535 / JIP02/86).